A 134-amino-acid chain; its full sequence is Small ribosomal subunit protein uS12 (134 aa).

The interval 1–26 (MPTTQQLLRKGRTTLQKKSKVPALKG) is disordered. A compositionally biased stretch (basic residues) spans 9 to 20 (RKGRTTLQKKSK). A 3-methylthioaspartic acid modification is found at Asp-89. Residues 103–134 (DTQGVKDRNKSRSKYGTKKPKAGAAAAGAKKK) form a disordered region. A compositionally biased stretch (basic residues) spans 113 to 123 (SRSKYGTKKPK). Residues 124-134 (AGAAAAGAKKK) are compositionally biased toward low complexity.

Belongs to the universal ribosomal protein uS12 family. As to quaternary structure, part of the 30S ribosomal subunit. Contacts proteins S8 and S17. May interact with IF1 in the 30S initiation complex.

In terms of biological role, with S4 and S5 plays an important role in translational accuracy. Functionally, interacts with and stabilizes bases of the 16S rRNA that are involved in tRNA selection in the A site and with the mRNA backbone. Located at the interface of the 30S and 50S subunits, it traverses the body of the 30S subunit contacting proteins on the other side and probably holding the rRNA structure together. The combined cluster of proteins S8, S12 and S17 appears to hold together the shoulder and platform of the 30S subunit. This is Small ribosomal subunit protein uS12 from Deinococcus geothermalis (strain DSM 11300 / CIP 105573 / AG-3a).